Reading from the N-terminus, the 253-residue chain is Ribosomal RNA small subunit methyltransferase G (253 aa).

S-adenosyl-L-methionine is bound by residues Gly84, Leu89, 136-137 (IE), and Arg155.

It belongs to the methyltransferase superfamily. RNA methyltransferase RsmG family.

The protein localises to the cytoplasm. Specifically methylates the N7 position of a guanine in 16S rRNA. The chain is Ribosomal RNA small subunit methyltransferase G from Prochlorococcus marinus (strain SARG / CCMP1375 / SS120).